The sequence spans 207 residues: ATP synthase subunit a (207 aa).

Transmembrane regions (helical) follow at residues 3–23 (QHVI…TIFA), 62–82 (LIAS…IPGL), 88–108 (NLNT…FEGI), 119–139 (FLGP…LSHL), 158–178 (LISV…VMLI), and 180–200 (LIAV…YIAG).

It belongs to the ATPase A chain family. In terms of assembly, F-type ATPases have 2 components, CF(1) - the catalytic core - and CF(0) - the membrane proton channel. CF(1) has five subunits: alpha(3), beta(3), gamma(1), delta(1), epsilon(1). CF(0) has three main subunits: a(1), b(2) and c(9-12). The alpha and beta chains form an alternating ring which encloses part of the gamma chain. CF(1) is attached to CF(0) by a central stalk formed by the gamma and epsilon chains, while a peripheral stalk is formed by the delta and b chains.

The protein localises to the cell inner membrane. Key component of the proton channel; it plays a direct role in the translocation of protons across the membrane. This Sulfurihydrogenibium sp. (strain YO3AOP1) protein is ATP synthase subunit a.